The primary structure comprises 217 residues: Large ribosomal subunit protein bL25 (217 aa).

Positions 187 to 217 (STPSGLEVEEETGEEESAEPEVIEKGKKEEE) are disordered. The span at 193 to 207 (EVEEETGEEESAEPE) shows a compositional bias: acidic residues. Residues 208–217 (VIEKGKKEEE) are compositionally biased toward basic and acidic residues.

The protein belongs to the bacterial ribosomal protein bL25 family. CTC subfamily. As to quaternary structure, part of the 50S ribosomal subunit; part of the 5S rRNA/L5/L18/L25 subcomplex. Contacts the 5S rRNA. Binds to the 5S rRNA independently of L5 and L18.

This is one of the proteins that binds to the 5S RNA in the ribosome where it forms part of the central protuberance. This chain is Large ribosomal subunit protein bL25, found in Thermosipho africanus (strain TCF52B).